The chain runs to 66 residues: Alpha-conotoxin Vc1a (66 aa).

Residues 1–25 (MGMRMMFTVFLLVVLATTVVSSTSG) form the signal peptide. The propeptide occupies 26 to 47 (RREFRGRNAAAKASDLVSLTDK). 2 cysteine pairs are disulfide-bonded: cysteine 51–cysteine 57 and cysteine 52–cysteine 65. The ser-Xaa-Pro motif, crucial for potent interaction with nAChR stretch occupies residues 53-55 (SDP). 2 key region for inhibition of alpha-9-alpha-10/CHRNA9-CHRNA10 nAChR regions span residues 54-56 (DPR) and 60-64 (DHPEI). A 4-hydroxyproline modification is found at proline 55. 4-carboxyglutamate is present on glutamate 63. Residue cysteine 65 is modified to Cysteine amide.

It belongs to the conotoxin A superfamily. In terms of processing, vc1.1 is described as having no post-translational modifications (except C-terminal amidation), whereas Vc1a contains a hydroxyproline at Pro-55 and a 4-carboxyglutamate at Glu-63 (and a C-terminal amidation). Post-translationally, hydroxylation of Pro-55 is not important for inhibition of alpha-9-alpha-10/CHRNA9-CHRNA10 nAChRs, since [P6O]Vc1.1 (Pro-55 hydroxylated) shows similar inhibition than native toxin (IC(50)=99.1 nM). In contrast, hydroxylation of Pro-55 seems to impair inhibition of HVA calcium channel currents, since [P6O]Vc1.1 has no effect on HVA calcium channel currents. In vivo, hydroxylation of Pro-55 seems to induce the loss of analgesic effects in rat models of neuropathic pain, since [P6O]Vc1.1 has no effect on mechanical allodynia. Gamma-carboxylation of Glu-63 is not important for inhibition of alpha-9-alpha-10/CHRNA9-CHRNA10 nAChRs, since [E14gamma]Vc1.1 (carboxyglutamate at Glu-63) shows similar inhibition than native toxin (IC(50)=65.3 nM). In contrast, gamma-carboxylation of Glu-63 seems to impair inhibition of HVA calcium channel currents, since [E14gamma]Vc1.1 has no effect on HVA calcium channel currents. In terms of processing, non-native isomers 'ribbon' (with disulfide connectivity C1-C4; C2-C3) and 'beads' (with disulfide connectivity C1-C2; C3-C4) of Vc1.1 also inhibit HVA calcium channel currents in rat DRG neurons (20-30% inhibition at 1 uM toxin). It has been shown that both reduced and alkylated Vc1.1 have no effect on HVA calcium channel currents. The observed activity can be attributed to specific isomers. Post-translationally, [C3S]Vc1.1(1-8) mutant is C-terminally amidated. As to expression, expressed by the venom duct.

The protein localises to the secreted. Functionally, alpha-conotoxins act on postsynaptic membranes, they bind to the nicotinic acetylcholine receptors (nAChR) and thus inhibit them. This toxin (native toxin Vc1a; hydroxylated and gamma-carboxylated) blocks alpha-9-alpha-10/CHRNA9-CHRNA10 nAChRs (IC(50)=62.9 nM). In contrast to the non-post-translationally modified analog Vc1.1, Vc1a does not inhibit high voltage-activated (HVA) calcium channel currents. In vivo, in contrast to Vc1.1, Vc1a does not show analgesic effects in rat models of neuropathic pain. Its function is as follows. The synthetic peptide Vc1.1 (a non-hydroxylated and non-gamma-carboxylated analog of Vc1a) has two types of targets. It blocks alpha-9-alpha-10/CHRNA9-CHRNA10 nAChRs (on rat receptors, IC(50)=19-109 nM) (with preference for rat over human receptors) and inhibits high voltage-activated (HVA) calcium channel (Cav2.2, Cav2.3) currents by acting on GABA(B) receptors (GABBR1 and GABBR2) (IC(50)=1.7 nM). It also shows moderate inhibition on alpha-6/alpha-3-beta-2-beta-3 (CHRNA6/CHRNA3-CHRNB2-CHRNB3) (IC(50)=140 nM) and alpha-6/alpha-3-beta-4 (CHRNA6/CHRNA3-CHRNB4) (IC(50)=980 nM). On alpha-9-alpha-10/CHRNA9-CHRNA10 nAChR, it most likely interacts with the alpha-10(+)/alpha-9(-)interface of the receptor. In vivo, it acts as a powerful analgesic in rat models of neuropathic pain. The polypeptide is Alpha-conotoxin Vc1a (Conus victoriae (Queen Victoria cone)).